We begin with the raw amino-acid sequence, 240 residues long: Triosephosphate isomerase (240 aa).

Position 9–11 (9–11) interacts with substrate; it reads NWK. The active-site Electrophile is H94. E163 (proton acceptor) is an active-site residue. Residues G169, S202, and 223 to 224 contribute to the substrate site; that span reads GG.

Belongs to the triosephosphate isomerase family. As to quaternary structure, homodimer.

It is found in the cytoplasm. It catalyses the reaction D-glyceraldehyde 3-phosphate = dihydroxyacetone phosphate. It functions in the pathway carbohydrate biosynthesis; gluconeogenesis. Its pathway is carbohydrate degradation; glycolysis; D-glyceraldehyde 3-phosphate from glycerone phosphate: step 1/1. Functionally, involved in the gluconeogenesis. Catalyzes stereospecifically the conversion of dihydroxyacetone phosphate (DHAP) to D-glyceraldehyde-3-phosphate (G3P). The sequence is that of Triosephosphate isomerase from Gloeobacter violaceus (strain ATCC 29082 / PCC 7421).